An 834-amino-acid polypeptide reads, in one-letter code: Enhancer of filamentation 1 (834 aa).

Residues 3–65 (ARNLMARALY…PGNRVKLLIG (63 aa)) form the SH3 domain. Residues Tyr92, Tyr164, Tyr166, Tyr177, Tyr189, Tyr214, and Tyr223 each carry the phosphotyrosine modification. A Phosphoserine modification is found at Ser296. Residue Tyr317 is modified to Phosphotyrosine. 2 disordered regions span residues 328–402 (PPAE…DKRL) and 584–624 (SQMP…SERS). Positions 332-344 (TSEKANPEERDGV) are enriched in basic and acidic residues. The short motif at 360–363 (DVVD) is the Caspase cleavage related site element. Residues 368 to 397 (LSFSSTGSTRSNMSTSSTTSKESSVSASPS) are compositionally biased toward low complexity. Residue Ser369 is modified to Phosphoserine. The divergent helix-loop-helix motif stretch occupies residues 710–760 (FYYDQCETHYISLLNAIDALFSCVSSAQPPRIFVAHSKFVILSAHKLVFIG). The interval 710-834 (FYYDQCETHY…KRSLLEMATF (125 aa)) is required for interaction with PLK1. Ser780 carries the post-translational modification Phosphoserine. Position 804 is a phosphothreonine (Thr804).

Belongs to the CAS family. In terms of assembly, homodimer. Forms heterodimers with BCAR1/p130cas. Forms complexes with PTK2B/RAFTK, adapter protein CRKL and LYN kinase. Part of a complex composed of NEDD9, AURKA and CTTN; within the complex NEDD9 acts as a scaffold protein and is required for complex formation. Part of a ternary complex composed of SMAD3, ITCH/AIP4 and NEDD9/HEF1; within the complex NEDD9/HEF1 interacts (via N-terminus) with ITCH/AIP4; the complex mediates ubiquitination and proteasomal degradation of NEDD9/HEF1. Interacts with ID2. Interacts with CTTN (via N-terminus). Interacts with MICAL. Interacts with TXNL4/DIM1. Interacts with BCAR3 (via Ras-GEF domain). Interacts with SH2D3C isoform 1 and isoform 2. Interacts with BCAR3. Interacts with ECT2. Interacts with PTPN11/SHP-2 (via SH2 domains); the interaction is enhanced when NEDD9/CAS-L is tyrosine phosphorylated. Interacts (via C-terminus) with PLK1 (via polo box domain). Interacts with NKX2-5. Interacts with SMAD3; the interaction is inhibited by oxidation of NEDD9. Interacts with ABL1; interaction is induced by CXCL12-mediated phosphorylation of NEDD/HEF1. Interacts (via SH3 domain) with PTK2/FAK. Interacts with FYN; in the presence of PTK2. Interacts with INPPL1/SHIP2. Polyubiquitinated by ITCH/AIP4, leading to proteasomal degradation. In terms of processing, PTK2/FAK1 phosphorylates the protein at the YDYVHL motif (conserved among all cas proteins) following integrin stimulation. The SRC family kinases (FYN, SRC, LCK and CRK) are recruited to the phosphorylated sites and can phosphorylate other tyrosine residues. Ligation of either integrin beta-1 or B-cell antigen receptor on tonsillar B-cells and B-cell lines promotes tyrosine phosphorylation and both integrin and BCR-mediated tyrosine phosphorylation requires an intact actin network. Phosphorylation is required to recruit NEDD9 to T-cell receptor microclusters at the periphery of newly formed immunological synapses. In fibroblasts transformation with oncogene v-ABL results in an increase in tyrosine phosphorylation. Transiently phosphorylated following CD3 cross-linking and this phosphorylated form binds to CRKL and C3G. A mutant lacking the SH3 domain is phosphorylated upon CD3 cross-linking but not upon integrin beta-1 cross-linking. Tyrosine phosphorylation occurs upon stimulation of the G-protein coupled C1a calcitonin receptor. Calcitonin-stimulated tyrosine phosphorylation is mediated by calcium- and protein kinase C-dependent mechanisms and requires the integrity of the actin cytoskeleton. Phosphorylation at Ser-369 induces proteasomal degradation. Phosphorylated by LYN. Phosphorylation at Ser-780 by CSNK1D or CSNK1E, or phosphorylation of Thr-804 by CSNK1E enhances the interaction of NEDD9 with PLK1.

The protein resides in the cytoplasm. It localises to the cell cortex. It is found in the nucleus. The protein localises to the golgi apparatus. Its subcellular location is the cell projection. The protein resides in the lamellipodium. It localises to the cell junction. It is found in the focal adhesion. The protein localises to the cytoskeleton. Its subcellular location is the spindle pole. The protein resides in the cilium. It localises to the cilium basal body. It is found in the basolateral cell membrane. Negatively regulates embryonic fibroblast migration. May play an important role in integrin beta-1 or B cell antigen receptor (BCR) mediated signaling in B- and T-cells. Integrin beta-1 stimulation leads to recruitment of various proteins including CRKl and SHPTP2 to the tyrosine phosphorylated form. Promotes adhesion and migration of lymphocytes; as a result required for the correct migration of lymphocytes to the spleen and other secondary lymphoid organs. Plays a role in the organization of T-cell F-actin cortical cytoskeleton and the centralization of T-cell receptor microclusters at the immunological synapse. Negatively regulates cilia outgrowth in polarized cysts. Modulates cilia disassembly via activation of AURKA-mediated phosphorylation of HDAC6 and subsequent deacetylation of alpha-tubulin. In conjunction with NKX2-5, positively regulates transcription of genes such as COL3A1 and MMP2, resulting in increased pulmonary endothelial fibrosis in response to hypoxia. Positively regulates RANKL-induced osteoclastogenesis. Required for the maintenance of hippocampal dendritic spines in the dentate gyrus and CA1 regions, thereby involved in spatial learning and memory. This is Enhancer of filamentation 1 from Canis lupus familiaris (Dog).